Consider the following 189-residue polypeptide: Adenylate kinase (189 aa).

10–15 provides a ligand contact to ATP; the sequence is GAGKGT. Residues 30–59 are NMP; sequence STGDIFRANVSGGTELGKKAQAYMDRGDLV. AMP-binding positions include Thr-31, Arg-36, 57 to 59, 85 to 88, and Gln-92; these read DLV and GFPR. The tract at residues 126 to 136 is LID; the sequence is ERARIDNRSDD. Arg-127 is a binding site for ATP. Residues Arg-133 and Arg-144 each contribute to the AMP site. An ATP-binding site is contributed by Gly-172.

The protein belongs to the adenylate kinase family. In terms of assembly, monomer.

Its subcellular location is the cytoplasm. It carries out the reaction AMP + ATP = 2 ADP. It participates in purine metabolism; AMP biosynthesis via salvage pathway; AMP from ADP: step 1/1. Catalyzes the reversible transfer of the terminal phosphate group between ATP and AMP. Plays an important role in cellular energy homeostasis and in adenine nucleotide metabolism. The sequence is that of Adenylate kinase from Thermobifida fusca (strain YX).